Here is a 169-residue protein sequence, read N- to C-terminus: Cell division inhibitor SulA (169 aa).

The segment covering 1 to 16 has biased composition (polar residues); sequence MFTSAHANRSPLTSAS. The tract at residues 1–20 is disordered; it reads MFTSAHANRSPLTSASVRRP. Positions 106–112 are ftsZ binding; that stretch reads ALRTGNY. The segment at 162 to 169 is lon protease binding; it reads KIHSNLYH.

Belongs to the SulA family. In terms of assembly, interacts with FtsZ. Is rapidly cleaved and degraded by the Lon protease once DNA damage is repaired.

Component of the SOS system and an inhibitor of cell division. Accumulation of SulA causes rapid cessation of cell division and the appearance of long, non-septate filaments. In the presence of GTP, binds a polymerization-competent form of FtsZ in a 1:1 ratio, thus inhibiting FtsZ polymerization and therefore preventing it from participating in the assembly of the Z ring. This mechanism prevents the premature segregation of damaged DNA to daughter cells during cell division. In Klebsiella aerogenes (Enterobacter aerogenes), this protein is Cell division inhibitor SulA.